The sequence spans 338 residues: MTKQKVAILGPGSWGTALSQVLNDNGHDVRLWGNIPDQIEEINTKHTNRHYFKDIVLDKNITATLDLGQALSDVDAVLFVVPTKVTRLVARQVAAILDHKVVVMHASKGLEPETHERLSTILEEEIPAHFRSEVVVVSGPSHAEETIVRDITLITAASKDIEAAKYVQSLFSNHYFRLYTNTDVIGVETAGALKNIIAVGAGALHGLGYGDNAKAAVITRGLAEITRLGVKLGADPLTYSGLSGVGDLIVTGTSVHSRNWRAGAALGRGEKLEDIEHNMGMVIEGIATTKVAYEIAQDLGVYMPITTAIYKSIYEGADIKESILGMMSNEFRSENEWH.

Ser13, Trp14, and Lys108 together coordinate NADPH. 3 residues coordinate sn-glycerol 3-phosphate: Lys108, Gly139, and Ser141. Position 143 (Ala143) interacts with NADPH. Residues Lys194, Asp247, Ser257, Arg258, and Asn259 each contribute to the sn-glycerol 3-phosphate site. Lys194 functions as the Proton acceptor in the catalytic mechanism. NADPH is bound at residue Arg258. Positions 282 and 284 each coordinate NADPH.

The protein belongs to the NAD-dependent glycerol-3-phosphate dehydrogenase family.

The protein localises to the cytoplasm. It catalyses the reaction sn-glycerol 3-phosphate + NAD(+) = dihydroxyacetone phosphate + NADH + H(+). The catalysed reaction is sn-glycerol 3-phosphate + NADP(+) = dihydroxyacetone phosphate + NADPH + H(+). It participates in membrane lipid metabolism; glycerophospholipid metabolism. Its function is as follows. Catalyzes the reduction of the glycolytic intermediate dihydroxyacetone phosphate (DHAP) to sn-glycerol 3-phosphate (G3P), the key precursor for phospholipid synthesis. This chain is Glycerol-3-phosphate dehydrogenase [NAD(P)+], found in Streptococcus pyogenes serotype M28 (strain MGAS6180).